The sequence spans 405 residues: L-rhamnonate dehydratase (405 aa).

Substrate contacts are provided by histidine 33 and arginine 59. Mg(2+)-binding residues include aspartate 226, glutamate 252, and glutamate 280. Catalysis depends on histidine 329, which acts as the Proton acceptor. Position 349 (glutamate 349) interacts with substrate.

This sequence belongs to the mandelate racemase/muconate lactonizing enzyme family. RhamD subfamily. As to quaternary structure, homooctamer; tetramer of dimers. The cofactor is Mg(2+).

The catalysed reaction is L-rhamnonate = 2-dehydro-3-deoxy-L-rhamnonate + H2O. Its function is as follows. Catalyzes the dehydration of L-rhamnonate to 2-keto-3-deoxy-L-rhamnonate (KDR). The protein is L-rhamnonate dehydratase of Salmonella paratyphi A (strain AKU_12601).